A 73-amino-acid polypeptide reads, in one-letter code: Excelsatoxin A (73 aa).

The N-terminal stretch at 1–20 (MRFALVAAITIALLVAGSVA) is a signal peptide. Residues 21–37 (DESSEDIDNIVIKTPLD) constitute a propeptide that is removed on maturation. 3 cysteine pairs are disulfide-bonded: Cys41/Cys58, Cys46/Cys60, and Cys54/Cys69.

It belongs to the gympietide family. As to expression, expressed in trichomes, that are stiff epidermal hairs located on the surface of petioles and leaves. Not expressed in other aerial parts.

It is found in the secreted. Its function is as follows. Neurotoxin certainly responsible for the defensive, persistent, and painful stings of the giant stinging tree. Inhibits inactivation of Nav1.7/SCN9A sodium channel in sensory neurons by directly interacting with TMEM233, a newly described Nav-interacting protein. Has virtually no effect on Nav1.7/SCN9A function in heterologous expression systems and in neurons that do not express TMEM233. Also weakly but significantly affects Nav1.8/SCN10A. Coexpression of TMEM233 with Nav also confers ExTxA sensitivity to Nav1.1-Nav1.6. On the Nav1.7/SCN9A channel, causes a significant hyperpolarizing shift in the voltage dependence of activation. Its effects on Nav currents are irreversible, with no apparent reduction in activity even after repeated wash steps over 30 minutes. Does not show activity on Nav1.9/SCN11A. Does not show insecticidal activities. In vivo, induces nocifensive behavior in mice (licking or biting and shaking or lifting of the affected paw) lasting for approximately 1 hour. In Dendrocnide excelsa (Giant stinging tree), this protein is Excelsatoxin A.